The chain runs to 730 residues: Polyribonucleotide nucleotidyltransferase (730 aa).

Mg(2+) contacts are provided by D494 and D500. The KH domain maps to 561–622 (PRIQTIQIDP…EAMNRAIQEI (62 aa)). Positions 642-711 (GKIYTGRVTG…RSGKVRLSRK (70 aa)) constitute an S1 motif domain.

It belongs to the polyribonucleotide nucleotidyltransferase family. The cofactor is Mg(2+).

The protein localises to the cytoplasm. The enzyme catalyses RNA(n+1) + phosphate = RNA(n) + a ribonucleoside 5'-diphosphate. Its function is as follows. Involved in mRNA degradation. Catalyzes the phosphorolysis of single-stranded polyribonucleotides processively in the 3'- to 5'-direction. This Opitutus terrae (strain DSM 11246 / JCM 15787 / PB90-1) protein is Polyribonucleotide nucleotidyltransferase.